We begin with the raw amino-acid sequence, 214 residues long: Dephospho-CoA kinase (214 aa).

Residues 4–204 enclose the DPCK domain; the sequence is IVGLTGGIGS…QRYLQLAQQK (201 aa). 12–17 provides a ligand contact to ATP; sequence GSGKST.

This sequence belongs to the CoaE family.

The protein resides in the cytoplasm. The enzyme catalyses 3'-dephospho-CoA + ATP = ADP + CoA + H(+). It functions in the pathway cofactor biosynthesis; coenzyme A biosynthesis; CoA from (R)-pantothenate: step 5/5. Its function is as follows. Catalyzes the phosphorylation of the 3'-hydroxyl group of dephosphocoenzyme A to form coenzyme A. This is Dephospho-CoA kinase from Mannheimia succiniciproducens (strain KCTC 0769BP / MBEL55E).